The sequence spans 561 residues: Carbohydrate sulfotransferase 15 (561 aa).

Residues 1 to 80 (MRHCINCCIQ…FLRFRKGKRC (80 aa)) are Cytoplasmic-facing. Residues 81–101 (SLVFGLIIMTLVMASYILSGA) form a helical; Signal-anchor for type II membrane protein membrane-spanning segment. Residues 102–561 (HQELLISSPF…DDEAFAWKTT (460 aa)) are Lumenal-facing. 3'-phosphoadenylyl sulfate is bound at residue 263-267 (KCGTT). N364 is a glycosylation site (N-linked (GlcNAc...) asparagine). 3'-phosphoadenylyl sulfate-binding residues include R392 and S400.

This sequence belongs to the sulfotransferase 1 family. As to quaternary structure, homodimer; disulfide-linked (Potential). The relevance of homodimerization is however unsure. May interact with phosphorylated proteins in resting B-cells, including HCK. A divalent metal cation is required as a cofactor. Requires glutathione as cofactor. Glycosylated.

The protein resides in the golgi apparatus membrane. It carries out the reaction dermatan 4'-sulfate + n 3'-phosphoadenylyl sulfate = dermatan 4',6'-bissulfate + n adenosine 3',5'-bisphosphate + n H(+). It catalyses the reaction chondroitin 4'-sulfate + n 3'-phosphoadenylyl sulfate = chondroitin 4',6'-bissulfate + n adenosine 3',5'-bisphosphate + n H(+). Inhibited by phenyl beta-GalNAc(4,6-SO(4)). In terms of biological role, sulfotransferase that transfers sulfate from 3'-phosphoadenosine 5'-phosphosulfate (PAPS) to the C-6 hydroxyl group of the GalNAc 4-sulfate residue of chondroitin sulfate A and forms chondroitin sulfate E containing GlcA-GalNAc(4,6-SO(4)) repeating units. It also transfers sulfate to a unique non-reducing terminal sequence, GalNAc(4SO4)-GlcA(2SO4)-GalNAc(6SO4), to yield a highly sulfated structure similar to the structure found in thrombomodulin chondroitin sulfate. May also act as a B-cell receptor involved in BCR ligation-mediated early activation that mediate regulatory signals key to B-cell development and/or regulation of B-cell-specific RAG expression; however such results are unclear in vivo. The protein is Carbohydrate sulfotransferase 15 (Chst15) of Rattus norvegicus (Rat).